Consider the following 654-residue polypeptide: APC membrane recruitment protein 2 (654 aa).

Disordered regions lie at residues 1 to 105, 224 to 289, 316 to 369, and 381 to 654; these read MEVQ…TAPL, ECGN…QSEQ, IIAD…PQVS, and PAHQ…QSRK. Residues 9–18 show a composition bias toward pro residues; the sequence is EPPPCDPQPP. A compositionally biased stretch (basic and acidic residues) spans 60-70; the sequence is ELVRSKTHDGL. Residues 427 to 454 are compositionally biased toward basic and acidic residues; that stretch reads PQKDEDSPAPRRAEPVLHHAPARLEKRP. The span at 468-479 shows a compositional bias: polar residues; it reads SGSSKTGKQQPS. Positions 565–575 are enriched in low complexity; the sequence is SPKCSSSATSS. The span at 576–586 shows a compositional bias: polar residues; sequence FRSMKGSTSLP. Over residues 601 to 621 the composition is skewed to low complexity; it reads SHSSSQGALSSNLSPTSTTPP. A compositionally biased stretch (polar residues) spans 644–654; that stretch reads GKSTSTSQSRK.

The protein belongs to the Amer family.

The protein resides in the cell membrane. Negative regulator of the canonical Wnt signaling pathway involved in neuroectodermal patterning. Acts by specifically binding phosphatidylinositol 4,5-bisphosphate (PtdIns(4,5)P2), translocating to the cell membrane and interacting with key regulators of the canonical Wnt signaling pathway, such as components of the beta-catenin destruction complex. The chain is APC membrane recruitment protein 2 (amer2) from Danio rerio (Zebrafish).